A 121-amino-acid chain; its full sequence is Protein TusC (121 aa).

The protein belongs to the DsrF/TusC family. Heterohexamer, formed by a dimer of trimers. The hexameric TusBCD complex contains 2 copies each of TusB, TusC and TusD. The TusBCD complex interacts with TusE.

Its subcellular location is the cytoplasm. In terms of biological role, part of a sulfur-relay system required for 2-thiolation of 5-methylaminomethyl-2-thiouridine (mnm(5)s(2)U) at tRNA wobble positions. The chain is Protein TusC from Yersinia pestis bv. Antiqua (strain Antiqua).